The chain runs to 443 residues: ATP-dependent protease ATPase subunit HslU (443 aa).

Residues Ile-18, 60–65 (GVGKTE), Asp-256, Glu-321, and Arg-393 contribute to the ATP site.

Belongs to the ClpX chaperone family. HslU subfamily. As to quaternary structure, a double ring-shaped homohexamer of HslV is capped on each side by a ring-shaped HslU homohexamer. The assembly of the HslU/HslV complex is dependent on binding of ATP.

It is found in the cytoplasm. In terms of biological role, ATPase subunit of a proteasome-like degradation complex; this subunit has chaperone activity. The binding of ATP and its subsequent hydrolysis by HslU are essential for unfolding of protein substrates subsequently hydrolyzed by HslV. HslU recognizes the N-terminal part of its protein substrates and unfolds these before they are guided to HslV for hydrolysis. The chain is ATP-dependent protease ATPase subunit HslU from Escherichia coli O139:H28 (strain E24377A / ETEC).